The primary structure comprises 309 residues: Low density lipoprotein receptor adapter protein 1-A (309 aa).

Positions 41–195 constitute a PID domain; sequence LLEGMLFHLK…SGGEGASSSQ (155 aa). Residues 179–199 form a disordered region; sequence EKREKSGSGGEGASSSQSDGS. Residues 213–217 carry the Clathrin box motif; it reads LLDLE. Positions 250 to 277 are AP-2 complex binding; it reads WELDDGLDEAFARLAESRTNPQVLDIGL. Residues 258–267 carry the [DE]-X(1,2)-F-X-X-[FL]-X-X-X-R motif motif; the sequence is EAFARLAESR.

Interacts (via PID domain) with ldlr (via NPXY motif). Binds to soluble clathrin trimers and to the adapter protein complex 2 (AP-2, beta 2 subunit). Binds to phosphoinositides, which regulate clathrin bud assembly at the cell surface. Interacts with the VLDL receptor (vldlr). Interacts with the vitellogenin receptor. In terms of tissue distribution, expressed at high level during oogenesis and embryogenesis. Found in the oocyte vegetal cortex. Found at low level in the adult liver and spleen. Found at very low level in testis and heart.

It localises to the cytoplasm. Functionally, adapter protein (clathrin-associated sorting protein (CLASP)) required for efficient endocytosis of the LDL receptor (LDLR). Also involved in the vitellogenin receptor mediated endocytosis of nutrients during oogenesis. The sequence is that of Low density lipoprotein receptor adapter protein 1-A from Xenopus laevis (African clawed frog).